Reading from the N-terminus, the 426-residue chain is Docking protein 3 (426 aa).

In terms of domain architecture, PH spans 4–115 (PVKDGIIYVQ…WIEQLCQLAF (112 aa)). The IRS-type PTB domain occupies 145–249 (DLTEFPVLVL…ACQQQGQESP (105 aa)). Residues 243-282 (QQGQESPQPSAQGLSNQPWGAEAEDPQCSPTLGRAHSGSH) are disordered. Residues 247–260 (ESPQPSAQGLSNQP) show a composition bias toward polar residues. Tyr-331 is modified (phosphotyrosine). Residues 357 to 426 (GCRQAPEGHS…RDGPGARDWS (70 aa)) form a disordered region. The span at 402 to 411 (KPQRTLRAKL) shows a compositional bias: basic residues.

Belongs to the DOK family. Type A subfamily. As to quaternary structure, homooligomer. Interacts with GRB2 and INPP5D/SHIP. Post-translationally, tyrosine-phosphorylated in the presence of GRB2.

Its subcellular location is the cytoplasm. The protein resides in the cell membrane. DOK proteins are enzymatically inert adaptor or scaffolding proteins. They provide a docking platform for the assembly of multimolecular signaling complexes. Plays a role as negative regulator of the mobilization of calcium ions and of calcium signaling. The sequence is that of Docking protein 3 (DOK3) from Gallus gallus (Chicken).